The chain runs to 200 residues: Oligoribonuclease (200 aa).

Residues 5 to 169 (MVWIDCEMTG…ADIRESIAEL (165 aa)) form the Exonuclease domain. The active site involves Tyr126.

It belongs to the oligoribonuclease family.

The protein localises to the cytoplasm. 3'-to-5' exoribonuclease specific for small oligoribonucleotides. The protein is Oligoribonuclease of Streptomyces coelicolor (strain ATCC BAA-471 / A3(2) / M145).